Reading from the N-terminus, the 643-residue chain is Uromodulin (643 aa).

The first 26 residues, 1 to 26 (MKCLFSPNFMWMAAVVTSWVIIPAAT), serve as a signal peptide directing secretion. Residues 32-66 (KSCSECHSNATCTVDGAATTCACQEGFTGDGLECV) form the EGF-like 1 domain. Disulfide bonds link C34/C43, C37/C52, C54/C65, C71/C85, C79/C94, C96/C108, C114/C128, C122/C137, C139/C150, C152/C163, C157/C172, C176/C269, C197/C284, C219/C257, C225/C289, C250/C258, C299/C308, C302/C317, C319/C349, C337/C427, and C368/C391. N-linked (GlcNAc...) asparagine glycosylation is present at N40. The EGF-like 2; calcium-binding domain maps to 67–109 (DLDECAVLGAHNCSATKSCVNTLGSYTCVCPEGFLLSSELGCE). N-linked (GlcNAc...) asparagine glycosylation is present at N78. Residues 110 to 151 (DVDECAEPGLSRCHALATCINGEGNYSCVCPAGYLGDGRHCE) form the EGF-like 3; calcium-binding domain. N134 is a glycosylation site (N-linked (GlcNAc...) asparagine). The segment at 152–173 (CSPGSCGPGLDCVREGDALVCV) is beta hairpin. The interval 174–293 (DPCQVHRILD…CHLAYCTDPS (120 aa)) is D10C. Residue N234 is glycosylated (N-linked (GlcNAc...) asparagine). N-linked (GlcNAc...) asparagine glycosylation is present at N277. The EGF-like 4 domain maps to 294–325 (SVEGTCEECRVDEDCKSDNGEWHCQCKQDFNV). N-linked (GlcNAc...) asparagine glycosylation is present at N324. Positions 336–431 (ECGVDDIKLS…RINFACSYPL (96 aa)) are ZP-N. The ZP domain occupies 336 to 587 (ECGVDDIKLS…EKCRPTCPET (252 aa)). Residues N398 and N449 are each glycosylated (N-linked (GlcNAc...) asparagine). Residues 432-455 (DMKVSLKTSLQPMVSALNISMGGT) form a flexible ZP-N/ZP-C linker; important for secretion and polymerization into filaments region. Positions 456-466 (GTFTVRMALFQ) are internal hydrophobic patch (IHP). The ZP-C stretch occupies residues 456–587 (GTFTVRMALF…EKCRPTCPET (132 aa)). 3 disulfide bridges follow: C508-C568, C529-C584, and C573-C580. The N-linked (GlcNAc...) asparagine glycan is linked to N515. Residues 588-591 (RFRS) form an essential for cleavage by HPN region. Residues 600–608 (VLNLGPITR) form an external hydrophobic patch (EHP); regulates polymerization into filaments region. The GPI-anchor amidated serine moiety is linked to residue S621. Positions 622-643 (SLGLLQVWLPLLLSATLTLMSP) are cleaved as a propeptide — removed in mature form.

Homodimer that then polymerizes into long filaments. The filaments can additionally assemble laterally to form a sheet. The filaments consist of a zigzag-shaped backbone with laterally protruding arms which interact with bacterial adhesin fimH. Two fimH molecules can bind to a single UMOD monomer. Post-translationally, N-glycosylated. In terms of processing, proteolytically cleaved at a conserved C-terminal proteolytic cleavage site to generate the secreted form found in urine. This cleavage is catalyzed by HPN.

The protein localises to the apical cell membrane. The protein resides in the basolateral cell membrane. Its subcellular location is the cell projection. It is found in the cilium membrane. It localises to the secreted. Functionally, functions in biogenesis and organization of the apical membrane of epithelial cells of the thick ascending limb of Henle's loop (TALH), where it promotes formation of complex filamentous gel-like structure that may play a role in the water barrier permeability. May serve as a receptor for binding and endocytosis of cytokines (IL-1, IL-2) and TNF. Facilitates neutrophil migration across renal epithelia. In the urine, may contribute to colloid osmotic pressure, retards passage of positively charged electrolytes, and inhibits formation of liquid containing supersaturated salts and subsequent formation of salt crystals. Protects against urinary tract infections by binding to type 1 fimbriated E.coli. Binds to bacterial adhesin fimH which mediates the stable formation of bacterial aggregates, prevents the binding of E.coli to uroplakins UPK1A and UPK1B which act as urothelial receptors for type I fimbriae, and allows for pathogen clearance through micturation. Also promotes aggregation of other bacteria including K.pneumoniae, P.aeruginosa and S.mitis and so may also protect against other uropathogens. The chain is Uromodulin (UMOD) from Bos taurus (Bovine).